Here is a 238-residue protein sequence, read N- to C-terminus: Ribonuclease PH (238 aa).

Residues Arg-86 and Gly-124–Arg-126 each bind phosphate.

The protein belongs to the RNase PH family. As to quaternary structure, homohexameric ring arranged as a trimer of dimers.

It catalyses the reaction tRNA(n+1) + phosphate = tRNA(n) + a ribonucleoside 5'-diphosphate. Its function is as follows. Phosphorolytic 3'-5' exoribonuclease that plays an important role in tRNA 3'-end maturation. Removes nucleotide residues following the 3'-CCA terminus of tRNAs; can also add nucleotides to the ends of RNA molecules by using nucleoside diphosphates as substrates, but this may not be physiologically important. Probably plays a role in initiation of 16S rRNA degradation (leading to ribosome degradation) during starvation. The sequence is that of Ribonuclease PH from Psychrobacter sp. (strain PRwf-1).